Consider the following 602-residue polypeptide: Elongation factor 4 (602 aa).

The tr-type G domain maps to 7–189 (KYIRNFSIVA…AIVSKVPAPY (183 aa)). Residues 19 to 24 (DHGKST) and 136 to 139 (NKID) each bind GTP.

The protein belongs to the TRAFAC class translation factor GTPase superfamily. Classic translation factor GTPase family. LepA subfamily.

The protein localises to the cell membrane. The catalysed reaction is GTP + H2O = GDP + phosphate + H(+). Functionally, required for accurate and efficient protein synthesis under certain stress conditions. May act as a fidelity factor of the translation reaction, by catalyzing a one-codon backward translocation of tRNAs on improperly translocated ribosomes. Back-translocation proceeds from a post-translocation (POST) complex to a pre-translocation (PRE) complex, thus giving elongation factor G a second chance to translocate the tRNAs correctly. Binds to ribosomes in a GTP-dependent manner. In Clostridium botulinum (strain Loch Maree / Type A3), this protein is Elongation factor 4.